An 872-amino-acid chain; its full sequence is Protein translocase subunit SecA (872 aa).

ATP-binding positions include Gln87, 105–109, and Asp510; that span reads GEGKT. Cys847, Cys849, Cys858, and Cys859 together coordinate Zn(2+).

It belongs to the SecA family. In terms of assembly, monomer and homodimer. Part of the essential Sec protein translocation apparatus which comprises SecA, SecYEG and auxiliary proteins SecDF-YajC and YidC. Zn(2+) is required as a cofactor.

It localises to the cell inner membrane. The protein resides in the cytoplasm. It carries out the reaction ATP + H2O + cellular proteinSide 1 = ADP + phosphate + cellular proteinSide 2.. In terms of biological role, part of the Sec protein translocase complex. Interacts with the SecYEG preprotein conducting channel. Has a central role in coupling the hydrolysis of ATP to the transfer of proteins into and across the cell membrane, serving as an ATP-driven molecular motor driving the stepwise translocation of polypeptide chains across the membrane. In Aliarcobacter butzleri (strain RM4018) (Arcobacter butzleri), this protein is Protein translocase subunit SecA.